The following is a 195-amino-acid chain: Pyridoxal 5'-phosphate synthase subunit PdxT (195 aa).

Residue 46 to 48 (GES) coordinates L-glutamine. Cysteine 78 acts as the Nucleophile in catalysis. Residues arginine 105 and 133–134 (IR) contribute to the L-glutamine site. Catalysis depends on charge relay system residues histidine 169 and glutamate 171.

Belongs to the glutaminase PdxT/SNO family. In terms of assembly, in the presence of PdxS, forms a dodecamer of heterodimers. Only shows activity in the heterodimer.

It catalyses the reaction aldehydo-D-ribose 5-phosphate + D-glyceraldehyde 3-phosphate + L-glutamine = pyridoxal 5'-phosphate + L-glutamate + phosphate + 3 H2O + H(+). The enzyme catalyses L-glutamine + H2O = L-glutamate + NH4(+). Its pathway is cofactor biosynthesis; pyridoxal 5'-phosphate biosynthesis. Catalyzes the hydrolysis of glutamine to glutamate and ammonia as part of the biosynthesis of pyridoxal 5'-phosphate. The resulting ammonia molecule is channeled to the active site of PdxS. This chain is Pyridoxal 5'-phosphate synthase subunit PdxT, found in Geobacillus thermodenitrificans (strain NG80-2).